The primary structure comprises 275 residues: 2-dehydro-3-deoxyphosphooctonate aldolase (275 aa).

This sequence belongs to the KdsA family.

The protein resides in the cytoplasm. It carries out the reaction D-arabinose 5-phosphate + phosphoenolpyruvate + H2O = 3-deoxy-alpha-D-manno-2-octulosonate-8-phosphate + phosphate. Its pathway is carbohydrate biosynthesis; 3-deoxy-D-manno-octulosonate biosynthesis; 3-deoxy-D-manno-octulosonate from D-ribulose 5-phosphate: step 2/3. It participates in bacterial outer membrane biogenesis; lipopolysaccharide biosynthesis. This is 2-dehydro-3-deoxyphosphooctonate aldolase from Francisella tularensis subsp. mediasiatica (strain FSC147).